The primary structure comprises 349 residues: Anthranilate phosphoribosyltransferase (349 aa).

5-phospho-alpha-D-ribose 1-diphosphate-binding positions include Gly94, Gly97–Asp98, Thr102, Asn104–Thr107, Lys122–Ser130, and Ser134. Gly94 is an anthranilate binding site. Ser106 contributes to the Mg(2+) binding site. Asn125 is an anthranilate binding site. An anthranilate-binding site is contributed by Arg180. Residues Asp239 and Glu240 each coordinate Mg(2+).

It belongs to the anthranilate phosphoribosyltransferase family. As to quaternary structure, homodimer. Mg(2+) is required as a cofactor.

It catalyses the reaction N-(5-phospho-beta-D-ribosyl)anthranilate + diphosphate = 5-phospho-alpha-D-ribose 1-diphosphate + anthranilate. It functions in the pathway amino-acid biosynthesis; L-tryptophan biosynthesis; L-tryptophan from chorismate: step 2/5. Its function is as follows. Catalyzes the transfer of the phosphoribosyl group of 5-phosphorylribose-1-pyrophosphate (PRPP) to anthranilate to yield N-(5'-phosphoribosyl)-anthranilate (PRA). In Trichlorobacter lovleyi (strain ATCC BAA-1151 / DSM 17278 / SZ) (Geobacter lovleyi), this protein is Anthranilate phosphoribosyltransferase.